Reading from the N-terminus, the 448-residue chain is Glutamate--tRNA ligase 2 (448 aa).

The 'HIGH' region signature appears at 9 to 19; sequence PSPTGKLHIGN. Residues 240-244 carry the 'KMSKS' region motif; that stretch reads KISKR. Lysine 243 lines the ATP pocket.

This sequence belongs to the class-I aminoacyl-tRNA synthetase family. Glutamate--tRNA ligase type 1 subfamily. As to quaternary structure, monomer.

It localises to the cytoplasm. The enzyme catalyses tRNA(Glu) + L-glutamate + ATP = L-glutamyl-tRNA(Glu) + AMP + diphosphate. Catalyzes the attachment of glutamate to tRNA(Glu) in a two-step reaction: glutamate is first activated by ATP to form Glu-AMP and then transferred to the acceptor end of tRNA(Glu). The sequence is that of Glutamate--tRNA ligase 2 from Orientia tsutsugamushi (strain Boryong) (Rickettsia tsutsugamushi).